The primary structure comprises 42 residues: Protein YmiD (42 aa).

The sequence is that of Protein YmiD from Escherichia coli (strain K12).